The following is a 292-amino-acid chain: 11-beta-hydroxysteroid dehydrogenase 1 (292 aa).

Residues 2 to 7 lie on the Cytoplasmic side of the membrane; it reads AFMKKY. A helical; Signal-anchor for type II membrane protein transmembrane segment spans residues 8-24; sequence LLPLLGLFLAYYYYSAN. Residues 25 to 292 lie on the Lumenal side of the membrane; sequence EEFRPEMLQG…KFDISKLVNN (268 aa). NADP(+)-binding positions include 41–67, 92–93, and 119–121; these read GASK…TARS, TM, and NHI. Residues N123 and N162 are each glycosylated (N-linked (GlcNAc...) asparagine). S170 serves as a coordination point for substrate. The active-site Proton acceptor is the Y183. 183-187 is an NADP(+) binding site; sequence YSASK. The N-linked (GlcNAc...) asparagine glycan is linked to N207. 218–222 lines the NADP(+) pocket; it reads IDTDT.

This sequence belongs to the short-chain dehydrogenases/reductases (SDR) family. As to quaternary structure, homodimer. In terms of processing, glycosylated. As to expression, expressed in the eye.

Its subcellular location is the endoplasmic reticulum membrane. The protein localises to the microsome membrane. It catalyses the reaction an 11beta-hydroxysteroid + NADP(+) = an 11-oxosteroid + NADPH + H(+). The enzyme catalyses corticosterone + NADP(+) = 11-dehydrocorticosterone + NADPH + H(+). The catalysed reaction is cortisone + NADPH + H(+) = cortisol + NADP(+). It carries out the reaction a 7beta-hydroxysteroid + NADP(+) = a 7-oxosteroid + NADPH + H(+). It catalyses the reaction 7-oxocholesterol + NADPH + H(+) = 7beta-hydroxycholesterol + NADP(+). The enzyme catalyses chenodeoxycholate + NADP(+) = 7-oxolithocholate + NADPH + H(+). The catalysed reaction is 7-oxolithocholate + NADPH + H(+) = ursodeoxycholate + NADP(+). It carries out the reaction glycochenodeoxycholate + NADP(+) = 7-oxoglycolithocholate + NADPH + H(+). It catalyses the reaction taurochenodeoxycholate + NADP(+) = 7-oxotaurolithocholate + NADPH + H(+). The enzyme catalyses tauroursodeoxycholate + NADP(+) = 7-oxotaurolithocholate + NADPH + H(+). The catalysed reaction is glycoursodeoxycholate + NADP(+) = 7-oxoglycolithocholate + NADPH + H(+). It carries out the reaction 7-oxopregnenolone + NADPH + H(+) = 7beta-hydroxypregnenolone + NADP(+). It catalyses the reaction 3beta,7alpha-dihydroxyandrost-5-en-17-one + NADP(+) = 3beta-hydroxy-5-androstene-7,17-dione + NADPH + H(+). The enzyme catalyses 3beta-hydroxy-5-androstene-7,17-dione + NADPH + H(+) = 3beta,7beta-dihydroxyandrost-5-en-17-one + NADP(+). The catalysed reaction is 3beta-hydroxy-5alpha-androstane-7,17-dione + NADPH + H(+) = 3beta,7beta-dihydroxy-5alpha-androstan-17-one + NADP(+). Its pathway is steroid metabolism. Its function is as follows. Controls the reversible conversion of biologically active glucocorticoids such as cortisone to cortisol, and 11-dehydrocorticosterone to corticosterone in the presence of NADP(H). Participates in the corticosteroid receptor-mediated anti-inflammatory response, as well as metabolic and homeostatic processes. Plays a role in the secretion of aqueous humor in the eye, maintaining a normotensive, intraocular environment. Bidirectional in vitro, predominantly functions as a reductase in vivo, thereby increasing the concentration of active glucocorticoids. It has broad substrate specificity, besides glucocorticoids, it accepts other steroid and sterol substrates. It has broad substrate specificity, besides glucocorticoids, it accepts other steroid and sterol substrates. Interconverts 7-oxo- and 7-hydroxy-neurosteroids such as 7-oxopregnenolone and 7beta-hydroxypregnenolone, 7-oxodehydroepiandrosterone (3beta-hydroxy-5-androstene-7,17-dione) and 7beta-hydroxydehydroepiandrosterone (3beta,7beta-dihydroxyandrost-5-en-17-one), among others. Catalyzes the stereo-specific conversion of the major dietary oxysterol, 7-ketocholesterol (7-oxocholesterol), into the more polar 7-beta-hydroxycholesterol metabolite. 7-oxocholesterol is one of the most important oxysterols, it participates in several events such as induction of apoptosis, accumulation in atherosclerotic lesions, lipid peroxidation, and induction of foam cell formation. Mediates the 7-oxo reduction of 7-oxolithocholate mainly to chenodeoxycholate, and to a lesser extent to ursodeoxycholate, both in its free form and when conjugated to glycine or taurine, providing a link between glucocorticoid activation and bile acid metabolism. Catalyzes the synthesis of 7-beta-25-dihydroxycholesterol from 7-oxo-25-hydroxycholesterol in vitro, which acts as a ligand for the G-protein-coupled receptor (GPCR) Epstein-Barr virus-induced gene 2 (EBI2) and may thereby regulate immune cell migration. This Oryctolagus cuniculus (Rabbit) protein is 11-beta-hydroxysteroid dehydrogenase 1.